A 220-amino-acid polypeptide reads, in one-letter code: Small ribosomal subunit protein uS5 (220 aa).

The interval 1-39 is disordered; sequence MAEQPAGQAGTTDNRDARGDREGRRRDSGRGSRERDGEK. The span at 13–39 shows a compositional bias: basic and acidic residues; the sequence is DNRDARGDREGRRRDSGRGSRERDGEK. An S5 DRBM domain is found at 42–105; that stretch reads YLERVVAINR…EEARKSFFRV (64 aa).

The protein belongs to the universal ribosomal protein uS5 family. In terms of assembly, part of the 30S ribosomal subunit. Contacts proteins S4 and S8.

With S4 and S12 plays an important role in translational accuracy. Functionally, located at the back of the 30S subunit body where it stabilizes the conformation of the head with respect to the body. The sequence is that of Small ribosomal subunit protein uS5 from Mycobacterium bovis (strain ATCC BAA-935 / AF2122/97).